A 97-amino-acid polypeptide reads, in one-letter code: Stefin-1 (97 aa).

A Secondary area of contact motif is present at residues 46–50 (QVVAG).

Belongs to the cystatin family.

The protein localises to the cytoplasm. In terms of biological role, this is an intracellular thiol proteinase inhibitor. The polypeptide is Stefin-1 (Stfa1) (Mus musculus (Mouse)).